The sequence spans 92 residues: UPF0223 protein SERP0684 (92 aa).

It belongs to the UPF0223 family.

This is UPF0223 protein SERP0684 from Staphylococcus epidermidis (strain ATCC 35984 / DSM 28319 / BCRC 17069 / CCUG 31568 / BM 3577 / RP62A).